Here is a 252-residue protein sequence, read N- to C-terminus: PF03932 family protein CutC (252 aa).

The protein belongs to the CutC family.

Its subcellular location is the cytoplasm. This is PF03932 family protein CutC from Sodalis glossinidius (strain morsitans).